A 404-amino-acid polypeptide reads, in one-letter code: Zinc finger TRAF-type-containing protein 1 (404 aa).

The segment covering 1–13 (MSGAEEAGGGGPA) has biased composition (gly residues). Residues 1–22 (MSGAEEAGGGGPAAGPAGSVPA) are disordered. Residues 111-156 (CTVCLDLPKASVYQCTNGHLMCAGCFIHLLADARLKEEQATCPNCR) form an RING-type; degenerate zinc finger. Residues 152–225 (CPNCRCEISK…PWHGPFHELT (74 aa)) form a TRAF-type zinc finger.

This sequence belongs to the ZFTRAF1 family. As to quaternary structure, interacts with LGALS3.

Its subcellular location is the cytoplasm. It localises to the perinuclear region. This Homo sapiens (Human) protein is Zinc finger TRAF-type-containing protein 1.